Consider the following 248-residue polypeptide: Cobalt transport protein CbiM (248 aa).

The signal sequence occupies residues methionine 1–alanine 31. 6 helical membrane passes run leucine 39 to leucine 59, valine 75 to valine 95, leucine 107 to phenylalanine 127, threonine 139 to tryptophan 159, leucine 173 to valine 195, and isoleucine 213 to tyrosine 233.

This sequence belongs to the CbiM family. In terms of assembly, forms an energy-coupling factor (ECF) transporter complex composed of an ATP-binding protein (A component, CbiO), a transmembrane protein (T component, CbiQ) and 2 possible substrate-capture proteins (S components, CbiM and CbiN) of unknown stoichimetry.

It is found in the cell membrane. The protein operates within cofactor biosynthesis; adenosylcobalamin biosynthesis. Part of the energy-coupling factor (ECF) transporter complex CbiMNOQ involved in cobalt import. This is Cobalt transport protein CbiM from Limosilactobacillus reuteri (strain DSM 20016) (Lactobacillus reuteri).